The chain runs to 176 residues: Sarcoplasmic calcium-binding protein (176 aa).

An N-acetylthreonine modification is found at T1. EF-hand domains are found at residues 3-38 (YLVS…FTDL), 55-90 (KWWD…AFLA), 91-126 (TMTA…FGHE), and 127-160 (NESV…SFVT). The Ca(2+) site is built by D16, N18, D20, and N27. Residues D104, D106, D108, S110, and E115 each contribute to the Ca(2+) site.

Functionally, like parvalbumins, SCPs seem to be more abundant in fast contracting muscles, but no functional relationship can be established from this distribution. This chain is Sarcoplasmic calcium-binding protein, found in Mizuhopecten yessoensis (Japanese scallop).